The sequence spans 109 residues: Small ribosomal subunit protein bS20 (109 aa).

Residues Met1–Ser26 form a disordered region.

This sequence belongs to the bacterial ribosomal protein bS20 family.

In terms of biological role, binds directly to 16S ribosomal RNA. The sequence is that of Small ribosomal subunit protein bS20 from Hamiltonella defensa subsp. Acyrthosiphon pisum (strain 5AT).